The sequence spans 177 residues: Inorganic pyrophosphatase (177 aa).

Residues K30, R44, and Y56 each contribute to the substrate site. The Mg(2+) site is built by D66, D71, and D103. Y142 is a substrate binding site.

This sequence belongs to the PPase family. In terms of assembly, homohexamer. Mg(2+) serves as cofactor.

The protein localises to the cytoplasm. It catalyses the reaction diphosphate + H2O = 2 phosphate + H(+). Catalyzes the hydrolysis of inorganic pyrophosphate (PPi) forming two phosphate ions. In Mesorhizobium japonicum (strain LMG 29417 / CECT 9101 / MAFF 303099) (Mesorhizobium loti (strain MAFF 303099)), this protein is Inorganic pyrophosphatase.